Consider the following 142-residue polypeptide: Hemoglobin subunit zeta (142 aa).

The residue at position 2 (Ser-2) is an N-acetylserine. The 141-residue stretch at 2 to 142 folds into the Globin domain; sequence SLTKAERTMV…VSSVLTEKYR (141 aa). Phosphoserine is present on Ser-53. His-59 is a heme b binding site. A Phosphoserine modification is found at Ser-73. Residue His-88 participates in heme b binding.

The protein belongs to the globin family. As to quaternary structure, heterotetramer of two zeta chains and beta-type chains.

The zeta chain is an alpha-type chain of mammalian embryonic hemoglobin. In Equus caballus (Horse), this protein is Hemoglobin subunit zeta (HBZ1).